Consider the following 234-residue polypeptide: Large ribosomal subunit protein uL1 (234 aa).

The protein belongs to the universal ribosomal protein uL1 family. In terms of assembly, part of the 50S ribosomal subunit.

In terms of biological role, binds directly to 23S rRNA. The L1 stalk is quite mobile in the ribosome, and is involved in E site tRNA release. Its function is as follows. Protein L1 is also a translational repressor protein, it controls the translation of the L11 operon by binding to its mRNA. This is Large ribosomal subunit protein uL1 from Pseudoalteromonas translucida (strain TAC 125).